Reading from the N-terminus, the 145-residue chain is Antiholin-like protein LrgA (145 aa).

The next 4 membrane-spanning stretches (helical) occupy residues 10-30, 33-53, 72-92, and 96-116; these read PAHF…SKII, FMPI…VLLC, NIGL…GVIS, and FLII…TGYV.

It belongs to the CidA/LrgA family. LrgA subfamily.

It is found in the cell membrane. Its function is as follows. Inhibits the expression or activity of extracellular murein hydrolases by interacting, possibly with LrgB, with the holin-like proteins CidA and/or CidB. The LrgAB and CidAB proteins may affect the proton motive force of the membrane. May be involved in programmed cell death (PCD), possibly triggering PCD in response to antibiotics and environmental stresses. This Staphylococcus aureus (strain JH1) protein is Antiholin-like protein LrgA.